The chain runs to 304 residues: Non-specific ribonucleoside hydrolase RihC (304 aa).

His-233 is a catalytic residue.

This sequence belongs to the IUNH family. RihC subfamily.

Functionally, hydrolyzes both purine and pyrimidine ribonucleosides with a broad-substrate specificity. The sequence is that of Non-specific ribonucleoside hydrolase RihC from Escherichia coli (strain SMS-3-5 / SECEC).